Here is a 76-residue protein sequence, read N- to C-terminus: Translation initiation factor IF-1 (76 aa).

Residues 1–76 (MEDMAKKDGV…TRGRIVYRYK (76 aa)) form the S1-like domain.

This sequence belongs to the IF-1 family. Component of the 30S ribosomal translation pre-initiation complex which assembles on the 30S ribosome in the order IF-2 and IF-3, IF-1 and N-formylmethionyl-tRNA(fMet); mRNA recruitment can occur at any time during PIC assembly.

It is found in the cytoplasm. Its function is as follows. One of the essential components for the initiation of protein synthesis. Stabilizes the binding of IF-2 and IF-3 on the 30S subunit to which N-formylmethionyl-tRNA(fMet) subsequently binds. Helps modulate mRNA selection, yielding the 30S pre-initiation complex (PIC). Upon addition of the 50S ribosomal subunit IF-1, IF-2 and IF-3 are released leaving the mature 70S translation initiation complex. This is Translation initiation factor IF-1 from Renibacterium salmoninarum (strain ATCC 33209 / DSM 20767 / JCM 11484 / NBRC 15589 / NCIMB 2235).